The following is a 592-amino-acid chain: Anaphase-promoting complex subunit 8 (592 aa).

TPR repeat units follow at residues 66-99 (EYYKYILAKNYFDLKEYRRCSDVLIDCNKYQLPI), 160-193 (QQQQQQQQQKIEQCQEFKQLFQFYKKLYIENKKD), 291-324 (TYILAQTAIGNYNLRAYDIGEELFERLIELEPNR), 359-392 (PETCCIIGNYYSLKLEHDKAILYFQRALKLNDRY), 393-426 (LSAWTLIGHEFLEIKNVSAAINAYRKAVDINPRD), 428-460 (RAWYGLGQTYQLLKLPLYSLYYFKKATTLRPYD), 461-494 (PRMWCAAGGCYEFIERIPEAIKCYERAEENYDRE), and 496-528 (VAINKLAKLYQEIQNNEKAAFYYKKNLYYCDQE). The tract at residues 129–166 (QQQAQQQAQQAQQESQQNDKNNDTNNNNKTDQQQQQQQ) is disordered.

The protein belongs to the APC8/CDC23 family. In terms of assembly, the APC/C is composed of at least 13 subunits that stay tightly associated throughout the cell cycle: anapc1, anapc2, anapc3, anapc4, anapc5, anapc6, anapc7, anapc8, anapc10, anapc11, cdc20, cdc26 and cdh1.

The protein localises to the nucleus. Its pathway is protein modification; protein ubiquitination. Functionally, component of the anaphase promoting complex/cyclosome (APC/C), a cell cycle-regulated E3 ubiquitin-protein ligase complex that controls progression through mitosis and the G1 phase of the cell cycle. This chain is Anaphase-promoting complex subunit 8 (anapc8), found in Dictyostelium discoideum (Social amoeba).